Here is a 491-residue protein sequence, read N- to C-terminus: Rab5 GDP/GTP exchange factor (491 aa).

Positions 1-74 (MSLKSERRGI…EEEAFASSQS (74 aa)) are interaction with ubiquitinated proteins. Residues 13 to 47 (DQSDLLCKKGCGYYGNPAWQGFCSKCWREEYHKAR) form an A20-type zinc finger. Residues Cys-19, Cys-23, Cys-35, and Cys-38 each contribute to the Zn(2+) site. The disordered stretch occupies residues 66 to 85 (EEAFASSQSSQGAQSLTFSK). Positions 69–84 (FASSQSSQGAQSLTFS) are enriched in low complexity. 2 positions are modified to phosphoserine: Ser-124 and Ser-132. Lys-151 and Lys-170 each carry N6-acetyllysine. In terms of domain architecture, VPS9 spans 232–375 (EKKDLAIQKR…IEKLDAQSLN (144 aa)). Residues Ser-373, Ser-377, Ser-390, and Ser-400 each carry the phosphoserine modification. The disordered stretch occupies residues 462-491 (PPNQPLAAIDSENVENDKLPPPLQPQVYAG).

Interacts with RGS14; the interaction is GTP-dependent. Heterodimer with RABEP1. The heterodimer binds RAB4A and RAB5A that have been activated by GTP-binding. Interacts with RAB21, and with 100-fold lower affinity also with RAB22. Binds TSC2, GGA1, GGA2, GGA3, AP1G1 and AP1G2. Interacts with ubiquitinated EGFR. Monoubiquitinated.

Its subcellular location is the cytoplasm. The protein localises to the early endosome. It localises to the recycling endosome. Its function is as follows. Rab effector protein acting as linker between gamma-adaptin, RAB4A or RAB5A. Involved in endocytic membrane fusion and membrane trafficking of recycling endosomes. Stimulates nucleotide exchange on RAB5A. Can act as a ubiquitin ligase. The protein is Rab5 GDP/GTP exchange factor (RABGEF1) of Homo sapiens (Human).